Reading from the N-terminus, the 622-residue chain is Palmitoyltransferase ZDHHC13 (622 aa).

Residue methionine 1 is modified to N-acetylmethionine. At 1–291 the chain is on the cytoplasmic side; it reads MEGPGLGSQC…RLWRWLHKCE (291 aa). ANK repeat units lie at residues 43 to 78, 81 to 110, 115 to 144, 148 to 177, 181 to 211, 216 to 245, and 249 to 277; these read PLIEDSSNCDIVKATQYGIFERCKELVEAGYDVRQP, ENVSLLHWAAINNRLELVKFYISKGAVIDQ, LNSTPLHWAIRQGHLPMVILLLQHGADPTL, EGFSSIHLAVLFQHMPIIAYLISKGQSVNM, NGQTPLMLSAYKVIGPEPTGFLLKFNPSLSV, HQNTPLHWAVAAGNVSAVDKLLEAGSSLDI, and KGETPLDMALQSKNQLISHMLRTEAKMRA. Residues 292-312 form a helical membrane-spanning segment; sequence LFLLLILSMITLWAVGYILDF. Residues 313-320 lie on the Lumenal side of the membrane; that stretch reads NSDSWLLK. The chain crosses the membrane as a helical span at residues 321–341; it reads GCLLVALFFLTSLFPRFLVGY. At 342-347 the chain is on the cytoplasmic side; it reads KNLVYL. The chain crosses the membrane as a helical span at residues 348–368; the sequence is PTVFLLSSIFWIFMTWFILFF. Residues 369–371 lie on the Lumenal side of the membrane; that stretch reads PDT. A helical transmembrane segment spans residues 372–392; sequence AGSPLYFAFIFSIMAFLYFFY. The Cytoplasmic portion of the chain corresponds to 393–470; the sequence is KTWATDPGFT…RCIGFGNHHH (78 aa). Positions 426-476 constitute a DHHC domain; sequence TFCTSCLIRKPLRSLHCHVCNSCVARFDQHCFWTGRCIGFGNHHHYIFFLL. Cysteine 456 acts as the S-palmitoyl cysteine intermediate in catalysis. Residues 471–491 form a helical membrane-spanning segment; sequence YIFFLLSLSMVCDWIIYGSFV. The Lumenal portion of the chain corresponds to 492-518; that stretch reads YWSNHCATTFKEDGLWTYLNQIVACSP. A helical membrane pass occupies residues 519-539; that stretch reads WVLYIFMLAAFHFSWSTFLLI. At 540 to 622 the chain is on the cytoplasmic side; sequence NQLFQIAFLG…PAKEKVLRSV (83 aa).

This sequence belongs to the DHHC palmitoyltransferase family. AKR/ZDHHC17 subfamily. In terms of assembly, interacts (via ANK repeats) with CLIP3. Interacts (via ANK repeats) with DNAJC5 (via C-terminus). Interacts (via ANK repeats) with HTT. Interacts (via ANK repeats) with MAP6. Interacts (via ANK repeats) with SNAP23. Interacts (via ANK repeats) with SNAP25. May interact (via ANK repeats) with SPRED2. Expressed in most adult tissues, but at low levels in the liver, skin, and lung.

Its subcellular location is the golgi apparatus membrane. It localises to the cytoplasmic vesicle membrane. The catalysed reaction is L-cysteinyl-[protein] + hexadecanoyl-CoA = S-hexadecanoyl-L-cysteinyl-[protein] + CoA. Functionally, palmitoyltransferase that could catalyze the addition of palmitate onto various protein substrates. Palmitoyltransferase for HTT and GAD2. May play a role in Mg(2+) transport. This Mus musculus (Mouse) protein is Palmitoyltransferase ZDHHC13.